We begin with the raw amino-acid sequence, 689 residues long: UvrABC system protein B (689 aa).

The disordered stretch occupies residues 1–26 (MSDASGPLQPDRPEADVPFRVEAPFD). The Helicase ATP-binding domain maps to 40 to 422 (AGYEQGAQQQ…ERAQSANVVE (383 aa)). Residue 53–60 (GVTGSGKT) participates in ATP binding. A Beta-hairpin motif is present at residues 106-129 (YYNYYQPEAYVEQTDKYIEKDASI). The region spanning 443–605 (QVEDLMDRID…TTPTTIEKAV (163 aa)) is the Helicase C-terminal domain. The region spanning 632–667 (ALLVEDLEARMEDAASNLEFELAADIRDRMRELREA) is the UVR domain. The segment at 668-689 (FDLDGGDAPEDPGGVAPETEDW) is disordered.

Belongs to the UvrB family. As to quaternary structure, forms a heterotetramer with UvrA during the search for lesions. Interacts with UvrC in an incision complex.

Its subcellular location is the cytoplasm. Its function is as follows. The UvrABC repair system catalyzes the recognition and processing of DNA lesions. A damage recognition complex composed of 2 UvrA and 2 UvrB subunits scans DNA for abnormalities. Upon binding of the UvrA(2)B(2) complex to a putative damaged site, the DNA wraps around one UvrB monomer. DNA wrap is dependent on ATP binding by UvrB and probably causes local melting of the DNA helix, facilitating insertion of UvrB beta-hairpin between the DNA strands. Then UvrB probes one DNA strand for the presence of a lesion. If a lesion is found the UvrA subunits dissociate and the UvrB-DNA preincision complex is formed. This complex is subsequently bound by UvrC and the second UvrB is released. If no lesion is found, the DNA wraps around the other UvrB subunit that will check the other stand for damage. The chain is UvrABC system protein B from Halobacterium salinarum (strain ATCC 700922 / JCM 11081 / NRC-1) (Halobacterium halobium).